The primary structure comprises 144 residues: MKTYRIKPEEVERKWWVVDATGKTLGRLASEIAKILRGKHKPYYQPDVDCGDFVIVINAEKIRVTGKKLEQKKYYWHSRYPGGLKERTLKWMLENKPEEVIRLAVKRMLPKNRLGHRMLKKLKVYRGPEHPHQAQKPQPLEVKA.

The tract at residues 125–144 (YRGPEHPHQAQKPQPLEVKA) is disordered.

It belongs to the universal ribosomal protein uL13 family. As to quaternary structure, part of the 50S ribosomal subunit.

In terms of biological role, this protein is one of the early assembly proteins of the 50S ribosomal subunit, although it is not seen to bind rRNA by itself. It is important during the early stages of 50S assembly. The protein is Large ribosomal subunit protein uL13 of Aquifex aeolicus (strain VF5).